The primary structure comprises 183 residues: Small acidic protein (183 aa).

The segment at 1-183 is disordered; sequence MSAARESHPH…KMMFVKSSGS (183 aa). A Glycyl lysine isopeptide (Lys-Gly) (interchain with G-Cter in SUMO2) cross-link involves residue K13. A phosphoserine mark is found at S15 and S17. Over residues 48–78 the composition is skewed to basic and acidic residues; the sequence is GKKEHTGRLVIGDHKSTSHFRTGEEDKKINE. Residue K62 forms a Glycyl lysine isopeptide (Lys-Gly) (interchain with G-Cter in SUMO2) linkage. S63 is modified (phosphoserine). A Glycyl lysine isopeptide (Lys-Gly) (interchain with G-Cter in SUMO2) cross-link involves residue K75. 3 positions are modified to phosphoserine: S87, S127, and S147. The segment covering 106–149 has biased composition (acidic residues); it reads EVEDHDGEGDVAGDDDDNDDDSPDPESPDDSESDSESEKEESAE. Over residues 153-171 the composition is skewed to basic and acidic residues; it reads AAEHPDEVEDPKNKKDAKS. An N6-acetyllysine mark is found at K174 and K179.

It belongs to the SMAP family.

This is Small acidic protein (SMAP) from Pongo abelii (Sumatran orangutan).